Reading from the N-terminus, the 427-residue chain is Trigger factor (427 aa).

The PPIase FKBP-type domain maps to 163 to 248 (GDTVILDFEG…LHEIKTKEVP (86 aa)).

The protein belongs to the FKBP-type PPIase family. Tig subfamily.

The protein localises to the cytoplasm. The enzyme catalyses [protein]-peptidylproline (omega=180) = [protein]-peptidylproline (omega=0). Its function is as follows. Involved in protein export. Acts as a chaperone by maintaining the newly synthesized protein in an open conformation. Functions as a peptidyl-prolyl cis-trans isomerase. In Listeria welshimeri serovar 6b (strain ATCC 35897 / DSM 20650 / CCUG 15529 / CIP 8149 / NCTC 11857 / SLCC 5334 / V8), this protein is Trigger factor.